Reading from the N-terminus, the 612-residue chain is Chaperone protein DnaK (612 aa).

Phosphothreonine; by autocatalysis is present on Thr173. The segment at 576 to 612 (AAKAQQAEGGANAEGKKADDNVVDAEYEEVKDDETKK) is disordered. The span at 578–588 (KAQQAEGGANA) shows a compositional bias: low complexity. The span at 596–612 (NVVDAEYEEVKDDETKK) shows a compositional bias: acidic residues.

The protein belongs to the heat shock protein 70 family.

Its function is as follows. Acts as a chaperone. The polypeptide is Chaperone protein DnaK (Bacillus velezensis (strain DSM 23117 / BGSC 10A6 / LMG 26770 / FZB42) (Bacillus amyloliquefaciens subsp. plantarum)).